The sequence spans 335 residues: MGKLHVIEAKGTERLKRGFARMVKGGVIMDVTNAEQARIAEEAGAVSVMALHKVPADIRKAGGVARMAPIEKIQEIMDAVTIPVMAKVRIGHVAEARVLEALGVDMIDESEVLTPADPFFHIDKREFNVPFVCGARNLGEAVRRIWEGSAMIRTKGEAGTGNIVEAVRHVRLVADNIRLIQRMTDEQVYAVAEKFAEPYLRLARQIREISGLPEQILENEPVYGHYTYREIVDGLYKILLEIKKLGRLPVVNFAAGGVATPADAALMMQMGMDGVFVGSGIFKSSTPEKMARAIVEAVNHWDEPDVIAAISKEIGEPMKGLEIEELEVRLEERGV.

D30 provides a ligand contact to D-ribose 5-phosphate. K87 acts as the Schiff-base intermediate with D-ribose 5-phosphate in catalysis. G159 is a D-ribose 5-phosphate binding site. A D-glyceraldehyde 3-phosphate-binding site is contributed by R171. Residues G257 and 278–279 (GS) contribute to the D-ribose 5-phosphate site.

Belongs to the PdxS/SNZ family. As to quaternary structure, in the presence of PdxT, forms a dodecamer of heterodimers.

The catalysed reaction is aldehydo-D-ribose 5-phosphate + D-glyceraldehyde 3-phosphate + L-glutamine = pyridoxal 5'-phosphate + L-glutamate + phosphate + 3 H2O + H(+). Its pathway is cofactor biosynthesis; pyridoxal 5'-phosphate biosynthesis. Functionally, catalyzes the formation of pyridoxal 5'-phosphate from ribose 5-phosphate (RBP), glyceraldehyde 3-phosphate (G3P) and ammonia. The ammonia is provided by the PdxT subunit. Can also use ribulose 5-phosphate and dihydroxyacetone phosphate as substrates, resulting from enzyme-catalyzed isomerization of RBP and G3P, respectively. The polypeptide is Pyridoxal 5'-phosphate synthase subunit PdxS (Thermococcus onnurineus (strain NA1)).